The chain runs to 1117 residues: Reverse gyrase (1117 aa).

The RG N-terminal-type zinc finger occupies L3 to V42. Zn(2+)-binding residues include C13, C16, C31, and C34. Residues Q84 and A101–T108 each bind ATP. In terms of domain architecture, Helicase ATP-binding spans A88–I284. The short motif at D206–D209 is the DEAD box element. The segment at K551–N1117 is topoisomerase I. Residues S555–I712 form the Toprim domain. E561 provides a ligand contact to Mg(2+). The RG C-terminal-type zinc-finger motif lies at I631 to D658. Zn(2+) contacts are provided by C634, C637, C648, and C651. Residue D681 coordinates Mg(2+). The Topo IA-type catalytic domain maps to D728–L1114. The active-site O-(5'-phospho-DNA)-tyrosine intermediate is the Y864.

This sequence in the N-terminal section; belongs to the DEAD box helicase family. DDVD subfamily. The protein in the C-terminal section; belongs to the type IA topoisomerase family. Monomer. The cofactor is Zn(2+). Requires Mg(2+) as cofactor.

It is found in the cytoplasm. It carries out the reaction ATP + H2O = ADP + phosphate + H(+). Functionally, modifies the topological state of DNA by introducing positive supercoils in an ATP-dependent process, increasing the linking number in steps of +1; also positively supercoils with dATP and ATP-gamma-S. With UTP or dTTP relaxes negatively supercoiled DNA, in the absence of any nucleotide partially relaxes negative supercoils. In the absence of nucleotide has a higher affinity for dsDNA with a single-stranded tail than dsDNA or ssDNA. Has an ATPase activity in the absence of DNA. Binds to single-stranded DNA, transiently cleaves and then rejoins the ends, introducing a positive supercoil in the process. The scissile phosphodiester is attacked by the catalytic tyrosine of the enzyme, resulting in the formation of a DNA-(5'-phosphotyrosyl)-enzyme intermediate. Probably involved in rewinding DNA strands in regions of the chromosome that have opened up to allow replication, transcription, DNA repair and/or for DNA protection. The sequence is that of Reverse gyrase from Caldanaerobacter subterraneus subsp. tengcongensis (strain DSM 15242 / JCM 11007 / NBRC 100824 / MB4) (Thermoanaerobacter tengcongensis).